The following is a 486-amino-acid chain: Cobyric acid synthase (486 aa).

One can recognise a GATase cobBQ-type domain in the interval 248 to 435 (VLNVVVPVLP…LHGLFESPAA (188 aa)). Residue C329 is the Nucleophile of the active site. The active site involves H427.

The protein belongs to the CobB/CobQ family. CobQ subfamily.

It functions in the pathway cofactor biosynthesis; adenosylcobalamin biosynthesis. Catalyzes amidations at positions B, D, E, and G on adenosylcobyrinic A,C-diamide. NH(2) groups are provided by glutamine, and one molecule of ATP is hydrogenolyzed for each amidation. This is Cobyric acid synthase from Pseudomonas syringae pv. tomato (strain ATCC BAA-871 / DC3000).